Here is a 436-residue protein sequence, read N- to C-terminus: Serine--tRNA ligase (436 aa).

241–243 (TSE) serves as a coordination point for L-serine. 272–274 (RAE) contacts ATP. E295 is an L-serine binding site. Residue 359-362 (EISS) participates in ATP binding. An L-serine-binding site is contributed by S395.

This sequence belongs to the class-II aminoacyl-tRNA synthetase family. Type-1 seryl-tRNA synthetase subfamily. In terms of assembly, homodimer. The tRNA molecule binds across the dimer.

The protein resides in the cytoplasm. It catalyses the reaction tRNA(Ser) + L-serine + ATP = L-seryl-tRNA(Ser) + AMP + diphosphate + H(+). The catalysed reaction is tRNA(Sec) + L-serine + ATP = L-seryl-tRNA(Sec) + AMP + diphosphate + H(+). It functions in the pathway aminoacyl-tRNA biosynthesis; selenocysteinyl-tRNA(Sec) biosynthesis; L-seryl-tRNA(Sec) from L-serine and tRNA(Sec): step 1/1. Catalyzes the attachment of serine to tRNA(Ser). Is also able to aminoacylate tRNA(Sec) with serine, to form the misacylated tRNA L-seryl-tRNA(Sec), which will be further converted into selenocysteinyl-tRNA(Sec). In Beijerinckia indica subsp. indica (strain ATCC 9039 / DSM 1715 / NCIMB 8712), this protein is Serine--tRNA ligase.